Reading from the N-terminus, the 102-residue chain is Small ribosomal subunit protein bS6 (102 aa).

It belongs to the bacterial ribosomal protein bS6 family.

Its function is as follows. Binds together with bS18 to 16S ribosomal RNA. This is Small ribosomal subunit protein bS6 (rpsF) from Deinococcus radiodurans (strain ATCC 13939 / DSM 20539 / JCM 16871 / CCUG 27074 / LMG 4051 / NBRC 15346 / NCIMB 9279 / VKM B-1422 / R1).